A 104-amino-acid chain; its full sequence is Guanidinium exporter (104 aa).

Position 1 (Met1) is a topological domain, cytoplasmic. A helical transmembrane segment spans residues 2-19 (AWIILVIAGLLEVIWAIG). Over 20–28 (LKYSHGFSR) the chain is Periplasmic. The chain crosses the membrane as a helical span at residues 29 to 48 (LTPSIITLVAMAASVFLLAY). Over 49–54 (AMKSLP) the chain is Cytoplasmic. A helical membrane pass occupies residues 55 to 77 (AGTAYAVWTGIGAVGTAILGIVL). Residues 78-81 (LGES) lie on the Periplasmic side of the membrane. The helical transmembrane segment at 82-100 (ASLARILSLGLILAGIIGL) threads the bilayer. Over 101-104 (KLAS) the chain is Cytoplasmic.

This sequence belongs to the drug/metabolite transporter (DMT) superfamily. Small multidrug resistance (SMR) (TC 2.A.7.1) family. Gdx/SugE subfamily.

The protein resides in the cell inner membrane. Guanidinium ion exporter. Couples guanidinium export to the proton motive force, exchanging one guanidinium ion for two protons. This chain is Guanidinium exporter, found in Yersinia pestis.